Consider the following 92-residue polypeptide: Neurophysin 2 (92 aa).

Cystine bridges form between Cys-10/Cys-54, Cys-13/Cys-27, Cys-21/Cys-44, Cys-28/Cys-34, Cys-61/Cys-73, Cys-67/Cys-85, and Cys-74/Cys-79.

It belongs to the vasopressin/oxytocin family. There is an equilibrium between the monomeric and dimeric forms. On peptide binding the dimeric form predominates. A shorter neurophysin molecule (1-90) also exists and is probably derived from the complete protein by proteolytic degradation (in vivo or after extraction).

Its subcellular location is the secreted. Its function is as follows. Neurophysin 2 specifically binds vasopressin. The protein is Neurophysin 2 (AVP) of Loxodonta africana (African elephant).